Here is a 302-residue protein sequence, read N- to C-terminus: MPHTNEDPTAQQAGVILDPPPPLPPPPQIHLLPPTVAKCKFFKKVAENSDPSTGGCEELKKMIKNRQSRFNGELKWLLYNQYVPSLIQEGPQCGLVALWMAGKLLNLAHEAPLQTIVEAAVSRGYTAQGEMFSAANMAVLAKEVFGCRSELLTGGMDGENKGKILQQLTSGLPVLIPYDEDFNHEPCQREGHRAHWAVISGVLFGVRCGSFSPDPDIPGLCYPSSDSPSLEDLNIQEIYLVAKQGKSLRYQLWEYDCISRSNGQLIHLDPKRSNDGNVYIVPSGGVKAGLCGQIVLFQPKDV.

Residues 1-26 (MPHTNEDPTAQQAGVILDPPPPLPPP) are disordered. A peptidase C39-like region spans residues 85–205 (SLIQEGPQCG…WAVISGVLFG (121 aa)). Residue cysteine 93 is part of the active site.

It belongs to the ACTMAP family.

Its subcellular location is the cytoplasm. The catalysed reaction is N-terminal N(alpha)-acetyl-L-methionyl-L-aspartyl-[protein] + H2O = N-terminal L-aspartyl-[protein] + N-acetyl-L-methionine. The enzyme catalyses N-terminal N(alpha)-acetyl-L-methionyl-L-glutamyl-[protein] + H2O = N-terminal L-glutamyl-[protein] + N-acetyl-L-methionine. It carries out the reaction N-terminal N(alpha)-acetyl-L-cysteinyl-L-aspartyl-[protein] + H2O = N-terminal L-aspartyl-[protein] + N-acetyl-L-cysteine. It catalyses the reaction N-terminal N(alpha)-acetyl-L-cysteinyl-L-glutamyl-[protein] + H2O = N-terminal L-glutamyl-[protein] + N-acetyl-L-cysteine. Actin maturation protease that specifically mediates the cleavage of immature acetylated N-terminal actin, thereby contributing to actin maturation. Cleaves N-terminal acetylated methionine of immature cytoplasmic beta- and gamma-actin after translation. Cleaves N-terminal acetylated cysteine of muscle alpha-actin after canonical removal of N-terminal methionine. The chain is Actin maturation protease from Xenopus tropicalis (Western clawed frog).